Here is a 262-residue protein sequence, read N- to C-terminus: Putative non-heme bromoperoxidase BpoC (262 aa).

Substrate is bound by residues R21, 87–88, and R120; that span reads SM. Residue S87 is part of the active site. Catalysis depends on residues D211 and H239. H239 contributes to the substrate binding site.

It belongs to the AB hydrolase superfamily. In terms of assembly, homodimer.

The sequence is that of Putative non-heme bromoperoxidase BpoC (bpoC) from Mycobacterium tuberculosis (strain CDC 1551 / Oshkosh).